A 383-amino-acid chain; its full sequence is S-adenosylmethionine synthase (383 aa).

ATP is bound at residue histidine 15. Aspartate 17 is a binding site for Mg(2+). Glutamate 43 provides a ligand contact to K(+). L-methionine is bound by residues glutamate 56 and glutamine 99. The tract at residues 99–109 is flexible loop; that stretch reads QSPDINQGVDR. ATP-binding positions include 164 to 166, 230 to 231, aspartate 239, 245 to 246, alanine 262, and lysine 266; these read DAK, RF, and RK. Position 239 (aspartate 239) interacts with L-methionine. L-methionine is bound at residue lysine 270.

This sequence belongs to the AdoMet synthase family. Homotetramer; dimer of dimers. Mg(2+) serves as cofactor. Requires K(+) as cofactor.

It localises to the cytoplasm. It catalyses the reaction L-methionine + ATP + H2O = S-adenosyl-L-methionine + phosphate + diphosphate. Its pathway is amino-acid biosynthesis; S-adenosyl-L-methionine biosynthesis; S-adenosyl-L-methionine from L-methionine: step 1/1. In terms of biological role, catalyzes the formation of S-adenosylmethionine (AdoMet) from methionine and ATP. The overall synthetic reaction is composed of two sequential steps, AdoMet formation and the subsequent tripolyphosphate hydrolysis which occurs prior to release of AdoMet from the enzyme. This Shewanella denitrificans (strain OS217 / ATCC BAA-1090 / DSM 15013) protein is S-adenosylmethionine synthase.